Here is a 407-residue protein sequence, read N- to C-terminus: Monooxygenase 2 (407 aa).

This sequence belongs to the 3-hydroxybenzoate 6-hydroxylase family. As to quaternary structure, monomer. FAD serves as cofactor. In terms of tissue distribution, expressed in seeds, seedlings, roots, leaves, flowers, pollen and siliques.

The protein is Monooxygenase 2 of Arabidopsis thaliana (Mouse-ear cress).